Here is a 394-residue protein sequence, read N- to C-terminus: MMDASRSQQPLDAWDDISDSEFLNIPSDEESIESQLPLIGETKGKHSVNLDKPSSSSSFHKCSEEAPKQEAVKTDDVRGLKRKSLHENSFSPMQRFRKQHLSVTLLCDQTWCEMKSVYNLLKPHIKRKEMQRTEVQIGQEIHLSRELEIQDVVPVDIRTREDGEAVKLLNMLHMIPLLEAGQRVREFPVFGVQEGVFIMGVIDELMYNQKGELVLNELKTRRQNSLPSSAQDKVNCFQVGLYKLLFDGLVRGEMKKNHIFDHLKLRSAQILGAGVQAHAKNLGVHARTFEELVETLLITVSCSDLPCIDLLQIEYFHQGSNGPIGTRVAPFDEAQIRGELQAYLSYWTGQREPKGVDIEEAWKCRSCLYEEICEWRKNRFTVSDQQAAHSSSHL.

The disordered stretch occupies residues 42–79; that stretch reads TKGKHSVNLDKPSSSSSFHKCSEEAPKQEAVKTDDVRG. Over residues 61–79 the composition is skewed to basic and acidic residues; that stretch reads KCSEEAPKQEAVKTDDVRG. Cys-112, Cys-364, Cys-367, and Cys-373 together coordinate [4Fe-4S] cluster.

Belongs to the EXO5 family. In terms of assembly, monomer. Requires [4Fe-4S] cluster as cofactor. Mg(2+) is required as a cofactor.

The protein resides in the nucleus. It localises to the cytoplasm. The protein localises to the cytosol. Single-stranded DNA (ssDNA) bidirectional exonuclease involved in DNA repair. Probably involved in DNA repair following ultraviolet (UV) irradiation and interstrand cross-links (ICLs) damage. Has both 5'-3' and 3'-5' exonuclease activities with a strong preference for 5'-ends. The chain is Exonuclease V (exo5) from Danio rerio (Zebrafish).